A 174-amino-acid polypeptide reads, in one-letter code: Crossover junction endodeoxyribonuclease RuvC (174 aa).

Catalysis depends on residues aspartate 8, glutamate 67, and aspartate 139. Residues aspartate 8, glutamate 67, and aspartate 139 each contribute to the Mg(2+) site.

It belongs to the RuvC family. In terms of assembly, homodimer which binds Holliday junction (HJ) DNA. The HJ becomes 2-fold symmetrical on binding to RuvC with unstacked arms; it has a different conformation from HJ DNA in complex with RuvA. In the full resolvosome a probable DNA-RuvA(4)-RuvB(12)-RuvC(2) complex forms which resolves the HJ. Requires Mg(2+) as cofactor.

The protein resides in the cytoplasm. The enzyme catalyses Endonucleolytic cleavage at a junction such as a reciprocal single-stranded crossover between two homologous DNA duplexes (Holliday junction).. Its function is as follows. The RuvA-RuvB-RuvC complex processes Holliday junction (HJ) DNA during genetic recombination and DNA repair. Endonuclease that resolves HJ intermediates. Cleaves cruciform DNA by making single-stranded nicks across the HJ at symmetrical positions within the homologous arms, yielding a 5'-phosphate and a 3'-hydroxyl group; requires a central core of homology in the junction. The consensus cleavage sequence is 5'-(A/T)TT(C/G)-3'. Cleavage occurs on the 3'-side of the TT dinucleotide at the point of strand exchange. HJ branch migration catalyzed by RuvA-RuvB allows RuvC to scan DNA until it finds its consensus sequence, where it cleaves and resolves the cruciform DNA. The sequence is that of Crossover junction endodeoxyribonuclease RuvC from Stutzerimonas stutzeri (strain A1501) (Pseudomonas stutzeri).